The following is a 106-amino-acid chain: Iron-sulfur cluster assembly protein CyaY (106 aa).

The protein belongs to the frataxin family.

In terms of biological role, involved in iron-sulfur (Fe-S) cluster assembly. May act as a regulator of Fe-S biogenesis. This is Iron-sulfur cluster assembly protein CyaY from Shigella flexneri serotype 5b (strain 8401).